The chain runs to 410 residues: Tryptophan synthase beta chain (410 aa).

Lys-104 is modified (N6-(pyridoxal phosphate)lysine).

It belongs to the TrpB family. As to quaternary structure, tetramer of two alpha and two beta chains. Pyridoxal 5'-phosphate serves as cofactor.

It carries out the reaction (1S,2R)-1-C-(indol-3-yl)glycerol 3-phosphate + L-serine = D-glyceraldehyde 3-phosphate + L-tryptophan + H2O. The protein operates within amino-acid biosynthesis; L-tryptophan biosynthesis; L-tryptophan from chorismate: step 5/5. Its function is as follows. The beta subunit is responsible for the synthesis of L-tryptophan from indole and L-serine. The polypeptide is Tryptophan synthase beta chain (Thermosynechococcus vestitus (strain NIES-2133 / IAM M-273 / BP-1)).